The primary structure comprises 226 residues: PKHD-type hydroxylase LHK_00496 (226 aa).

Residues 78–178 (RFFPPLFNRY…RVASFMWIQS (101 aa)) form the Fe2OG dioxygenase domain. The Fe cation site is built by His96, Asp98, and His159. Position 169 (Arg169) interacts with 2-oxoglutarate.

The cofactor is Fe(2+). Requires L-ascorbate as cofactor.

In Laribacter hongkongensis (strain HLHK9), this protein is PKHD-type hydroxylase LHK_00496.